The following is a 291-amino-acid chain: Acetyl-coenzyme A carboxylase carboxyl transferase subunit beta (291 aa).

In terms of domain architecture, CoA carboxyltransferase N-terminal spans 29-291; sequence LWSKCPECGE…MHQQPAAVSA (263 aa). Residues Cys33, Cys36, Cys52, and Cys55 each coordinate Zn(2+). A C4-type zinc finger spans residues 33-55; that stretch reads CPECGEVVYRKDLIANASVCASC.

Belongs to the AccD/PCCB family. Acetyl-CoA carboxylase is a heterohexamer composed of biotin carboxyl carrier protein (AccB), biotin carboxylase (AccC) and two subunits each of ACCase subunit alpha (AccA) and ACCase subunit beta (AccD). Zn(2+) serves as cofactor.

Its subcellular location is the cytoplasm. The enzyme catalyses N(6)-carboxybiotinyl-L-lysyl-[protein] + acetyl-CoA = N(6)-biotinyl-L-lysyl-[protein] + malonyl-CoA. The protein operates within lipid metabolism; malonyl-CoA biosynthesis; malonyl-CoA from acetyl-CoA: step 1/1. Functionally, component of the acetyl coenzyme A carboxylase (ACC) complex. Biotin carboxylase (BC) catalyzes the carboxylation of biotin on its carrier protein (BCCP) and then the CO(2) group is transferred by the transcarboxylase to acetyl-CoA to form malonyl-CoA. The chain is Acetyl-coenzyme A carboxylase carboxyl transferase subunit beta from Synechococcus sp. (strain RCC307).